Here is a 362-residue protein sequence, read N- to C-terminus: Phosphoserine aminotransferase (362 aa).

Residue R43 coordinates L-glutamate. Residues 77-78 (AR), W103, T153, D173, and Q196 contribute to the pyridoxal 5'-phosphate site. N6-(pyridoxal phosphate)lysine is present on K197.

This sequence belongs to the class-V pyridoxal-phosphate-dependent aminotransferase family. SerC subfamily. In terms of assembly, homodimer. Requires pyridoxal 5'-phosphate as cofactor.

It is found in the cytoplasm. The enzyme catalyses O-phospho-L-serine + 2-oxoglutarate = 3-phosphooxypyruvate + L-glutamate. The catalysed reaction is 4-(phosphooxy)-L-threonine + 2-oxoglutarate = (R)-3-hydroxy-2-oxo-4-phosphooxybutanoate + L-glutamate. Its pathway is amino-acid biosynthesis; L-serine biosynthesis; L-serine from 3-phospho-D-glycerate: step 2/3. It functions in the pathway cofactor biosynthesis; pyridoxine 5'-phosphate biosynthesis; pyridoxine 5'-phosphate from D-erythrose 4-phosphate: step 3/5. Functionally, catalyzes the reversible conversion of 3-phosphohydroxypyruvate to phosphoserine and of 3-hydroxy-2-oxo-4-phosphonooxybutanoate to phosphohydroxythreonine. This is Phosphoserine aminotransferase from Legionella pneumophila (strain Lens).